The primary structure comprises 126 residues: MHHRKSGRHLNRTSAHRKAMLRNMAVSLFQHELIKTTLPKAKELRRVVEPLITLAKEDTVANRRLAFNRLRDDAIVTKLFKEIAPRHKERPGGYCRVLKYGFRNGDSAPMAIVELVDREESESSED.

It belongs to the bacterial ribosomal protein bL17 family. Part of the 50S ribosomal subunit. Contacts protein L32.

The sequence is that of Large ribosomal subunit protein bL17 from Coxiella burnetii (strain CbuK_Q154) (Coxiella burnetii (strain Q154)).